The following is a 370-amino-acid chain: Glutamine synthetase (370 aa).

A GS beta-grasp domain is found at 23–102 (VLAEYVWIDA…VLTECWNNDG (80 aa)). The tract at residues 40–69 (CKTLDKKPSSVEDLPEWNFDGSSTGQAPGH) is disordered. A GS catalytic domain is found at 109-370 (HRHESAKLMK…FKEYARESSD (262 aa)).

It belongs to the glutamine synthetase family. In terms of assembly, homooctamer.

It is found in the cytoplasm. The enzyme catalyses L-glutamate + NH4(+) + ATP = L-glutamine + ADP + phosphate + H(+). This is Glutamine synthetase (GLN1) from Debaryomyces hansenii (strain ATCC 36239 / CBS 767 / BCRC 21394 / JCM 1990 / NBRC 0083 / IGC 2968) (Yeast).